A 224-amino-acid polypeptide reads, in one-letter code: Artemin (224 aa).

The N-terminal stretch at 1–39 (MELGLGEPTALSHCLRPRWQPALWPTLAALALLSSVTEA) is a signal peptide. Residues 40–111 (SLDPMSRSPA…AALRGARAAR (72 aa)) constitute a propeptide that is removed on maturation. A disordered region spans residues 41 to 124 (LDPMSRSPAS…RSSRARATDA (84 aa)). Positions 80–95 (RPPPQSPQPAPPPPGP) are enriched in pro residues. Low complexity predominate over residues 96 to 116 (ALQSPPAALRGARAARAGTRS). Intrachain disulfides connect Cys127–Cys192, Cys154–Cys220, and Cys158–Cys222. An N-linked (GlcNAc...) asparagine glycan is attached at Asn206.

This sequence belongs to the TGF-beta family. GDNF subfamily. As to quaternary structure, homodimer; disulfide-linked. Interacts with GFRA3 coreceptor and RET: forms a 2:2:2 ternary complex composed of ARTN ligand, GFRA3 and RET receptor. In terms of tissue distribution, cochlea. Expressed at higher level in sesorineural epithelium than in the modiolus region or substantia nigra.

The protein localises to the secreted. Its function is as follows. Growth factor that supports the survival of sensory and sympathetic peripheral neurons in culture and also supports the survival of dopaminergic neurons of the ventral mid-brain. Acts by binding to its coreceptor, GFRA3, leading to autophosphorylation and activation of the RET receptor. Strong attractant of gut hematopoietic cells thus promoting the formation Peyer's patch-like structures, a major component of the gut-associated lymphoid tissue. The chain is Artemin (Artn) from Rattus norvegicus (Rat).